The sequence spans 371 residues: Cathepsin W (371 aa).

The N-terminal stretch at 1 to 21 (MTLTAHLSYFLVLLLAGQGLS) is a signal peptide. Positions 22-125 (DSLLTKDAGP…KVESNTWGES (104 aa)) are excised as a propeptide. 2 N-linked (GlcNAc...) asparagine glycosylation sites follow: Asn48 and Asn112. Cystine bridges form between Cys148–Cys189, Cys182–Cys224, and Cys282–Cys347. Residue Cys151 is part of the active site. The N-linked (GlcNAc...) asparagine glycan is linked to Asn203. Catalysis depends on residues His289 and Asn326. Asn344 carries an N-linked (GlcNAc...) asparagine glycan.

It belongs to the peptidase C1 family.

The protein resides in the endoplasmic reticulum. In terms of biological role, may have a specific function in the mechanism or regulation of T-cell cytolytic activity. This is Cathepsin W (Ctsw) from Mus musculus (Mouse).